A 325-amino-acid polypeptide reads, in one-letter code: D site-binding protein (325 aa).

Disordered stretches follow at residues 1 to 99, 127 to 200, and 229 to 255; these read MARP…APGL, GLPP…DTVE, and RFSEEELKPQPIMKKARKIQVPEEQKD. Gly residues predominate over residues 17-28; that stretch reads GPAGTPPGGGAL. Composition is skewed to low complexity over residues 29–38 and 57–80; these read LGLRSLLQGT and ALPAATTPGPGLETAGPADAPAGA. S86 is subject to Phosphoserine. Residues 129–153 show a composition bias toward pro residues; it reads PPSPPPPGGPSPEPSPARTPAPSPG. Over residues 157–167 the composition is skewed to low complexity; sequence CGSASPRSSPG. A bZIP domain is found at 255-318; that stretch reads DEKYWSRRYK…SHYRAVLSRY (64 aa). The tract at residues 257 to 279 is basic motif; it reads KYWSRRYKNNEAAKRSRDARRLK. The leucine-zipper stretch occupies residues 283 to 297; it reads ISVRAAFLEKENALL.

Belongs to the bZIP family. PAR subfamily. In terms of assembly, binds DNA as a homodimer or a heterodimer. Can form a heterodimer with TEF. As to expression, ubiquitously expressed. Expressed in the suprachiasmatic nuclei (SCN) and in most peripheral tissues, with a strong circadian rhythmicity.

The protein localises to the nucleus. This transcriptional activator recognizes and binds to the sequence 5'-RTTAYGTAAY-3' found in the promoter of genes such as albumin, CYP2A4 and CYP2A5. It is not essential for circadian rhythm generation, but modulates important clock output genes. May be a direct target for regulation by the circadian pacemaker component clock. May affect circadian period and sleep regulation. This chain is D site-binding protein (DBP), found in Homo sapiens (Human).